The following is a 161-amino-acid chain: MKAVSPVRPSGRKAPSGCGGGELALRCLAEHGHSLGGSAAAAAAAAAARCKAAEAAADEPALCLQCDMNDCYSRLRRLVPTIPPNKKVSKVEILQHVIDYILDLQLALETHPALLRQPPPPAPPHHPAGTCPAAPPRTPLTALNTDPAGAVNKQGDSILCR.

Positions 52-104 (AAEAAADEPALCLQCDMNDCYSRLRRLVPTIPPNKKVSKVEILQHVIDYILDL) constitute a bHLH domain. The segment covering 117 to 126 (QPPPPAPPHH) has biased composition (pro residues). Positions 117–161 (QPPPPAPPHHPAGTCPAAPPRTPLTALNTDPAGAVNKQGDSILCR) are disordered.

As to quaternary structure, heterodimer with other HLH proteins.

The protein localises to the nucleus. Its function is as follows. Transcriptional regulator (lacking a basic DNA binding domain) which negatively regulates the basic helix-loop-helix (bHLH) transcription factors by forming heterodimers and inhibiting their DNA binding and transcriptional activity. Implicated in regulating a variety of cellular processes, including cellular growth, senescence, differentiation, apoptosis, angiogenesis, and neoplastic transformation. In Homo sapiens (Human), this protein is DNA-binding protein inhibitor ID-4 (ID4).